Here is a 466-residue protein sequence, read N- to C-terminus: Citrate synthase, mitochondrial (466 aa).

Residues 1–27 (MALLTAAARLLGTKNASCLVLAARHAS) constitute a mitochondrion transit peptide. Residues 2-21 (ALLTAAARLLGTKNASCLVL) carry the SIFI-degron motif. Residue Lys-57 is modified to N6-succinyllysine. Lys-76 is subject to N6-acetyllysine; alternate. Lys-76 is modified (N6-succinyllysine; alternate). An N6-succinyllysine mark is found at Lys-103 and Lys-193. Residue His-301 is part of the active site. Residues Lys-321 and Lys-327 each carry the N6-acetyllysine; alternate modification. 2 positions are modified to N6-succinyllysine; alternate: Lys-321 and Lys-327. The active site involves His-347. Residue Arg-356 participates in oxaloacetate binding. Lys-375 is modified (N6-acetyllysine; alternate). At Lys-375 the chain carries N6-succinyllysine; alternate. N6-acetyllysine is present on Lys-382. Lys-393 bears the N6-acetyllysine; alternate mark. The residue at position 393 (Lys-393) is an N6-succinyllysine; alternate. Lys-395 carries the N6,N6,N6-trimethyllysine modification. Asp-402 is an active-site residue. Arg-428 and Arg-448 together coordinate oxaloacetate. Lys-450 is modified (N6-succinyllysine). N6-acetyllysine; alternate is present on Lys-459. N6-succinyllysine; alternate is present on Lys-459.

The protein belongs to the citrate synthase family. Homodimer. Post-translationally, methylated. Trimethylation at Lys-395 by CSKMT decreases citrate synthase activity. In response to mitochondrial stress, the precursor protein is ubiquitinated by the SIFI complex in the cytoplasm before mitochondrial import, leading to its degradation. Within the SIFI complex, UBR4 initiates ubiquitin chain that are further elongated or branched by KCMF1.

The protein localises to the mitochondrion matrix. The catalysed reaction is oxaloacetate + acetyl-CoA + H2O = citrate + CoA + H(+). It participates in carbohydrate metabolism; tricarboxylic acid cycle; isocitrate from oxaloacetate: step 1/2. Key enzyme of the Krebs tricarboxylic acid cycle which catalyzes the synthesis of citrate from acetyl coenzyme A and oxaloacetate. In Macaca fascicularis (Crab-eating macaque), this protein is Citrate synthase, mitochondrial (CS).